The chain runs to 143 residues: Large ribosomal subunit protein uL11 (143 aa).

This sequence belongs to the universal ribosomal protein uL11 family. In terms of assembly, part of the ribosomal stalk of the 50S ribosomal subunit. Interacts with L10 and the large rRNA to form the base of the stalk. L10 forms an elongated spine to which L12 dimers bind in a sequential fashion forming a multimeric L10(L12)X complex. Post-translationally, one or more lysine residues are methylated.

Its function is as follows. Forms part of the ribosomal stalk which helps the ribosome interact with GTP-bound translation factors. This chain is Large ribosomal subunit protein uL11, found in Acidovorax ebreus (strain TPSY) (Diaphorobacter sp. (strain TPSY)).